The sequence spans 545 residues: 2-succinyl-5-enolpyruvyl-6-hydroxy-3-cyclohexene-1-carboxylate synthase (545 aa).

The span at glutamine 170 to serine 185 shows a compositional bias: polar residues. The disordered stretch occupies residues glutamine 170 to leucine 193.

This sequence belongs to the TPP enzyme family. MenD subfamily. In terms of assembly, homodimer. It depends on Mg(2+) as a cofactor. Mn(2+) serves as cofactor. The cofactor is thiamine diphosphate.

It carries out the reaction isochorismate + 2-oxoglutarate + H(+) = 5-enolpyruvoyl-6-hydroxy-2-succinyl-cyclohex-3-ene-1-carboxylate + CO2. Its pathway is quinol/quinone metabolism; 1,4-dihydroxy-2-naphthoate biosynthesis; 1,4-dihydroxy-2-naphthoate from chorismate: step 2/7. It participates in cofactor biosynthesis; phylloquinone biosynthesis. In terms of biological role, catalyzes the thiamine diphosphate-dependent decarboxylation of 2-oxoglutarate and the subsequent addition of the resulting succinic semialdehyde-thiamine pyrophosphate anion to isochorismate to yield 2-succinyl-5-enolpyruvyl-6-hydroxy-3-cyclohexene-1-carboxylate (SEPHCHC). The polypeptide is 2-succinyl-5-enolpyruvyl-6-hydroxy-3-cyclohexene-1-carboxylate synthase (Parasynechococcus marenigrum (strain WH8102)).